A 240-amino-acid polypeptide reads, in one-letter code: Putative truncated effector protein hopW1-2 (240 aa).

The segment at 1 to 32 is disordered; sequence MSPAQIIRTSHSFPPSFTGTSSSAENSHAQSP. A compositionally biased stretch (low complexity) spans 9-23; that stretch reads TSHSFPPSFTGTSSS.

The protein belongs to the HopW family.

The protein is Putative truncated effector protein hopW1-2 (hopW1-2) of Pseudomonas syringae pv. maculicola.